Reading from the N-terminus, the 730-residue chain is DNA ligase (730 aa).

The disordered stretch occupies residues 1 to 23 (MAGEQHAQPTSVPAEAREKHAQL). NAD(+) contacts are provided by residues 44–48 (DAEFD), 93–94 (SL), and Glu-124. Lys-126 acts as the N6-AMP-lysine intermediate in catalysis. NAD(+) contacts are provided by Arg-147, Glu-184, Lys-300, and Lys-324. The Zn(2+) site is built by Cys-418, Cys-421, Cys-437, and Cys-443. The BRCT domain maps to 638-727 (EGPRPLEGLT…PEAAAEVALP (90 aa)).

It belongs to the NAD-dependent DNA ligase family. LigA subfamily. It depends on Mg(2+) as a cofactor. Mn(2+) serves as cofactor.

The catalysed reaction is NAD(+) + (deoxyribonucleotide)n-3'-hydroxyl + 5'-phospho-(deoxyribonucleotide)m = (deoxyribonucleotide)n+m + AMP + beta-nicotinamide D-nucleotide.. Functionally, DNA ligase that catalyzes the formation of phosphodiester linkages between 5'-phosphoryl and 3'-hydroxyl groups in double-stranded DNA using NAD as a coenzyme and as the energy source for the reaction. It is essential for DNA replication and repair of damaged DNA. The sequence is that of DNA ligase from Streptomyces avermitilis (strain ATCC 31267 / DSM 46492 / JCM 5070 / NBRC 14893 / NCIMB 12804 / NRRL 8165 / MA-4680).